Here is a 527-residue protein sequence, read N- to C-terminus: Coproporphyrinogen III oxidase (527 aa).

Positions 1-14 are enriched in low complexity; sequence MSTTDRVTTPTPTV. The disordered stretch occupies residues 1–23; the sequence is MSTTDRVTTPTPTVSGTDAPGPD. Residues 33–38, 56–57, Lys64, and 78–81 each bind FAD; these read GGGITG, ES, and GPDS. A disordered region spans residues 231–267; the sequence is RRAARQRAAQNNAQQNSSHQNSTGQNNSAGTRGPAAS. A compositionally biased stretch (low complexity) spans 236–252; that stretch reads QRAAQNNAQQNSSHQNS. Residues Val300, Trp448, and 487–489 contribute to the FAD site; that span reads VGL.

This sequence belongs to the protoporphyrinogen/coproporphyrinogen oxidase family. Coproporphyrinogen III oxidase subfamily. The cofactor is FAD.

Its subcellular location is the cytoplasm. It carries out the reaction coproporphyrinogen III + 3 O2 = coproporphyrin III + 3 H2O2. It participates in porphyrin-containing compound metabolism; protoheme biosynthesis. In terms of biological role, involved in coproporphyrin-dependent heme b biosynthesis. Catalyzes the oxidation of coproporphyrinogen III to coproporphyrin III. The polypeptide is Coproporphyrinogen III oxidase (Propionibacterium freudenreichii subsp. freudenreichii).